A 132-amino-acid polypeptide reads, in one-letter code: U10-hexatoxin-Hi1a (132 aa).

The N-terminal stretch at 1 to 20 (MKGFIVFSLSLCLVFTVCLA) is a signal peptide. A propeptide spanning residues 21–30 (EDELMKEAVR) is cleaved from the precursor.

Contains 5 disulfide bonds. Expressed by the venom gland.

It localises to the secreted. Its function is as follows. Probable ion channel inhibitor. This Hadronyche infensa (Fraser island funnel-web spider) protein is U10-hexatoxin-Hi1a.